A 260-amino-acid polypeptide reads, in one-letter code: Exosome complex component Rrp42 (260 aa).

The protein belongs to the RNase PH family. Rrp42 subfamily. In terms of assembly, component of the archaeal exosome complex. Forms a hexameric ring-like arrangement composed of 3 Rrp41-Rrp42 heterodimers. The hexameric ring associates with a trimer of Rrp4 and/or Csl4 subunits.

The protein localises to the cytoplasm. Functionally, non-catalytic component of the exosome, which is a complex involved in RNA degradation. Contributes to the structuring of the Rrp41 active site. In Methanocella arvoryzae (strain DSM 22066 / NBRC 105507 / MRE50), this protein is Exosome complex component Rrp42.